We begin with the raw amino-acid sequence, 318 residues long: Myeloid-associated differentiation marker (318 aa).

MARVEL domains follow at residues 25–157 and 162–315; these read ALTQ…ARPG and YMAT…RLVF. 8 consecutive transmembrane segments (helical) span residues 35–55, 58–78, 95–115, 131–151, 165–185, 197–217, 233–253, and 290–310; these read LLQL…GAWT, MGNW…IILI, FPIT…IIYP, AIAA…EVAW, TVPG…FAFI, LEWC…TVLL, FLSG…VLWP, and LAVS…LVYS.

The protein belongs to the MAL family.

Its subcellular location is the membrane. The protein is Myeloid-associated differentiation marker (Myadm) of Rattus norvegicus (Rat).